The sequence spans 367 residues: Biotin synthase (367 aa).

The region spanning 73-308 is the Radical SAM core domain; the sequence is CCGNTVDLCS…EQIIRYAGGR (236 aa). Positions 91, 95, and 98 each coordinate [4Fe-4S] cluster. Residues Cys136, Cys173, Cys233, and Arg303 each contribute to the [2Fe-2S] cluster site.

Belongs to the radical SAM superfamily. Biotin synthase family. In terms of assembly, homodimer. It depends on [4Fe-4S] cluster as a cofactor. [2Fe-2S] cluster serves as cofactor.

The enzyme catalyses (4R,5S)-dethiobiotin + (sulfur carrier)-SH + 2 reduced [2Fe-2S]-[ferredoxin] + 2 S-adenosyl-L-methionine = (sulfur carrier)-H + biotin + 2 5'-deoxyadenosine + 2 L-methionine + 2 oxidized [2Fe-2S]-[ferredoxin]. It functions in the pathway cofactor biosynthesis; biotin biosynthesis; biotin from 7,8-diaminononanoate: step 2/2. In terms of biological role, catalyzes the conversion of dethiobiotin (DTB) to biotin by the insertion of a sulfur atom into dethiobiotin via a radical-based mechanism. The protein is Biotin synthase of Picosynechococcus sp. (strain ATCC 27264 / PCC 7002 / PR-6) (Agmenellum quadruplicatum).